A 231-amino-acid polypeptide reads, in one-letter code: Aspartate/glutamate leucyltransferase (231 aa).

This sequence belongs to the R-transferase family. Bpt subfamily.

It localises to the cytoplasm. The catalysed reaction is N-terminal L-glutamyl-[protein] + L-leucyl-tRNA(Leu) = N-terminal L-leucyl-L-glutamyl-[protein] + tRNA(Leu) + H(+). The enzyme catalyses N-terminal L-aspartyl-[protein] + L-leucyl-tRNA(Leu) = N-terminal L-leucyl-L-aspartyl-[protein] + tRNA(Leu) + H(+). Functionally, functions in the N-end rule pathway of protein degradation where it conjugates Leu from its aminoacyl-tRNA to the N-termini of proteins containing an N-terminal aspartate or glutamate. This chain is Aspartate/glutamate leucyltransferase, found in Pseudoalteromonas atlantica (strain T6c / ATCC BAA-1087).